A 121-amino-acid chain; its full sequence is Ribonuclease P protein component (121 aa).

It belongs to the RnpA family. In terms of assembly, consists of a catalytic RNA component (M1 or rnpB) and a protein subunit.

The enzyme catalyses Endonucleolytic cleavage of RNA, removing 5'-extranucleotides from tRNA precursor.. Functionally, RNaseP catalyzes the removal of the 5'-leader sequence from pre-tRNA to produce the mature 5'-terminus. It can also cleave other RNA substrates such as 4.5S RNA. The protein component plays an auxiliary but essential role in vivo by binding to the 5'-leader sequence and broadening the substrate specificity of the ribozyme. In Alcanivorax borkumensis (strain ATCC 700651 / DSM 11573 / NCIMB 13689 / SK2), this protein is Ribonuclease P protein component.